The sequence spans 158 residues: uncharacterized protein (158 aa).

Helical transmembrane passes span 12–32 (IITL…AVVV), 39–59 (LDIL…SLSV), 90–110 (LIYL…FNTI), and 113–133 (IIST…WLPL).

It localises to the cell membrane. This is an uncharacterized protein from Mycoplasma genitalium (strain ATCC 33530 / DSM 19775 / NCTC 10195 / G37) (Mycoplasmoides genitalium).